The primary structure comprises 520 residues: Bifunctional purine biosynthesis protein PurH (520 aa).

The 147-residue stretch at 1–147 (MAKIGRALIS…KNNRDVTVVV (147 aa)) folds into the MGS-like domain.

The protein belongs to the PurH family.

It catalyses the reaction (6R)-10-formyltetrahydrofolate + 5-amino-1-(5-phospho-beta-D-ribosyl)imidazole-4-carboxamide = 5-formamido-1-(5-phospho-D-ribosyl)imidazole-4-carboxamide + (6S)-5,6,7,8-tetrahydrofolate. It carries out the reaction IMP + H2O = 5-formamido-1-(5-phospho-D-ribosyl)imidazole-4-carboxamide. The protein operates within purine metabolism; IMP biosynthesis via de novo pathway; 5-formamido-1-(5-phospho-D-ribosyl)imidazole-4-carboxamide from 5-amino-1-(5-phospho-D-ribosyl)imidazole-4-carboxamide (10-formyl THF route): step 1/1. It participates in purine metabolism; IMP biosynthesis via de novo pathway; IMP from 5-formamido-1-(5-phospho-D-ribosyl)imidazole-4-carboxamide: step 1/1. This chain is Bifunctional purine biosynthesis protein PurH, found in Geobacter sp. (strain M21).